Reading from the N-terminus, the 189-residue chain is MSKLAEIEALLFVAGEDGLKVHQLAEILSLPPTGVIQSLEKLAEQYEVNPDSSLTLLETSKTYKLVTKPEFAEILRAYSRAPINQSLSRAALETLSIIAYKQPITRVEIDDIRGVNSSGALAKLLAFELVREDGKKEVIGRPNLYVTTDYFLDYMGINHLDELPIVEETELVAEESQLFIERTDIDENQ.

The protein belongs to the ScpB family. As to quaternary structure, homodimer. Homodimerization may be required to stabilize the binding of ScpA to the Smc head domains. Component of a cohesin-like complex composed of ScpA, ScpB and the Smc homodimer, in which ScpA and ScpB bind to the head domain of Smc. The presence of the three proteins is required for the association of the complex with DNA.

The protein resides in the cytoplasm. Functionally, participates in chromosomal partition during cell division. May act via the formation of a condensin-like complex containing Smc and ScpA that pull DNA away from mid-cell into both cell halves. The sequence is that of Segregation and condensation protein B from Streptococcus sanguinis (strain SK36).